Here is a 147-residue protein sequence, read N- to C-terminus: Small ribosomal subunit protein uS12 (147 aa).

The protein belongs to the universal ribosomal protein uS12 family. Part of the 30S ribosomal subunit.

With S4 and S5 plays an important role in translational accuracy. Located at the interface of the 30S and 50S subunits. This Ignicoccus hospitalis (strain KIN4/I / DSM 18386 / JCM 14125) protein is Small ribosomal subunit protein uS12.